A 240-amino-acid polypeptide reads, in one-letter code: Mediator of RNA polymerase II transcription subunit 19 (240 aa).

2 disordered regions span residues 32–58 and 169–240; these read GKTQ…DNSR and QPPK…SGLR. Basic residues-rich tracts occupy residues 170 to 181 and 212 to 224; these read PPKKKNKKHKQS and RKKK…KKSR.

This sequence belongs to the Mediator complex subunit 19 family. Component of the Mediator complex.

It localises to the nucleus. In terms of biological role, component of the Mediator complex, a coactivator involved in the regulated transcription of nearly all RNA polymerase II-dependent genes. Mediator functions as a bridge to convey information from gene-specific regulatory proteins to the basal RNA polymerase II transcription machinery. Mediator is recruited to promoters by direct interactions with regulatory proteins and serves as a scaffold for the assembly of a functional preinitiation complex with RNA polymerase II and the general transcription factors. The chain is Mediator of RNA polymerase II transcription subunit 19 (med19) from Xenopus laevis (African clawed frog).